We begin with the raw amino-acid sequence, 81 residues long: Neuronatin (81 aa).

It belongs to the neuronatin family.

In terms of biological role, may participate in the maintenance of segment identity in the hindbrain and pituitary development, and maturation or maintenance of the overall structure of the nervous system. May function as a regulatory subunit of ion channels. This Mesocricetus auratus (Golden hamster) protein is Neuronatin (NNAT).